Here is a 206-residue protein sequence, read N- to C-terminus: Small ribosomal subunit protein uS4 (206 aa).

Residues 96 to 156 enclose the S4 RNA-binding domain; sequence GRLDNVVYRM…EKAKNQLRVK (61 aa).

It belongs to the universal ribosomal protein uS4 family. As to quaternary structure, part of the 30S ribosomal subunit. Contacts protein S5. The interaction surface between S4 and S5 is involved in control of translational fidelity.

In terms of biological role, one of the primary rRNA binding proteins, it binds directly to 16S rRNA where it nucleates assembly of the body of the 30S subunit. Its function is as follows. With S5 and S12 plays an important role in translational accuracy. The sequence is that of Small ribosomal subunit protein uS4 from Marinobacter nauticus (strain ATCC 700491 / DSM 11845 / VT8) (Marinobacter aquaeolei).